The primary structure comprises 570 residues: Putative pyruvate decarboxylase C3G9.11c (570 aa).

Asp30 and His119 together coordinate pyruvate. Residues Thr396 and 419 to 421 contribute to the thiamine diphosphate site; that span reads GSI. Mg(2+) is bound at residue Asp451. Residues 452-453 and 478-483 each bind thiamine diphosphate; these read GS and NKGYTI. Mg(2+)-binding residues include Asn478 and Gly480. Glu484 is a pyruvate binding site.

It belongs to the TPP enzyme family. As to quaternary structure, homotetramer. Requires Mg(2+) as cofactor. Thiamine diphosphate serves as cofactor.

Its subcellular location is the cytoplasm. It is found in the nucleus. It catalyses the reaction a 2-oxocarboxylate + H(+) = an aldehyde + CO2. The enzyme catalyses pyruvate + H(+) = acetaldehyde + CO2. The protein is Putative pyruvate decarboxylase C3G9.11c of Schizosaccharomyces pombe (strain 972 / ATCC 24843) (Fission yeast).